Here is a 119-residue protein sequence, read N- to C-terminus: Large ribosomal subunit protein bL20 (119 aa).

The protein belongs to the bacterial ribosomal protein bL20 family.

In terms of biological role, binds directly to 23S ribosomal RNA and is necessary for the in vitro assembly process of the 50S ribosomal subunit. It is not involved in the protein synthesizing functions of that subunit. The protein is Large ribosomal subunit protein bL20 of Shewanella amazonensis (strain ATCC BAA-1098 / SB2B).